A 478-amino-acid polypeptide reads, in one-letter code: Methionine aminopeptidase 2-1 (478 aa).

Positions 1–124 are disordered; that stretch reads MGSKSPEGHN…PRVPLSTLFP (124 aa). Residues 46 to 56 show a composition bias toward acidic residues; the sequence is NDDDDADDDEK. Residues 92 to 104 are compositionally biased toward basic residues; it reads KKKKKRKRSKKKA. His230 contacts substrate. A divalent metal cation contacts are provided by Asp251, Asp262, and His331. His339 is a binding site for substrate. A divalent metal cation-binding residues include Glu364 and Glu459.

It belongs to the peptidase M24A family. Methionine aminopeptidase eukaryotic type 2 subfamily. It depends on Co(2+) as a cofactor. Zn(2+) is required as a cofactor. The cofactor is Mn(2+). Requires Fe(2+) as cofactor.

The protein resides in the cytoplasm. It carries out the reaction Release of N-terminal amino acids, preferentially methionine, from peptides and arylamides.. Cotranslationally removes the N-terminal methionine from nascent proteins. The N-terminal methionine is often cleaved when the second residue in the primary sequence is small and uncharged (Met-Ala-, Cys, Gly, Pro, Ser, Thr, or Val). The protein is Methionine aminopeptidase 2-1 of Aspergillus clavatus (strain ATCC 1007 / CBS 513.65 / DSM 816 / NCTC 3887 / NRRL 1 / QM 1276 / 107).